A 292-amino-acid chain; its full sequence is MKILVPATSANLGPGFDCLGLSLKLFNETQIQKSGVFSISIGGEGSDNIFLKKNNIFVNIFYEIYEKLSGKKDNFRFIFQNNIPLSRGLGSSSAVIVGAIASAYYMSGFKVEKERILDEALIYENHPDNIAPATLGGFVCSLVEKNKVYSIKKEIDKDLAAVVVIPNLAMSTEQSRQALAKNLSFNDAVFNLSHASFLTACFLEKKYEFLKFASQDKLHEINRMKNLPELFEVQKFALENKALMSTLSGSGSSFFSLAFKDDALALAKKMQTKFKDFCVQYLEFDDNGFEIC.

Position 84–94 (84–94) interacts with ATP; that stretch reads PLSRGLGSSSA.

It belongs to the GHMP kinase family. Homoserine kinase subfamily.

The protein localises to the cytoplasm. The catalysed reaction is L-homoserine + ATP = O-phospho-L-homoserine + ADP + H(+). Its pathway is amino-acid biosynthesis; L-threonine biosynthesis; L-threonine from L-aspartate: step 4/5. Catalyzes the ATP-dependent phosphorylation of L-homoserine to L-homoserine phosphate. This chain is Homoserine kinase, found in Campylobacter jejuni subsp. jejuni serotype O:6 (strain 81116 / NCTC 11828).